Here is a 343-residue protein sequence, read N- to C-terminus: L-threonine 3-dehydrogenase (343 aa).

C40 lines the Zn(2+) pocket. Catalysis depends on charge relay system residues T42 and H45. Zn(2+) contacts are provided by H65, E66, C95, C98, C101, and C109. NAD(+) contacts are provided by residues I177, D197, R202, 264–266 (LGI), and 288–289 (IY).

This sequence belongs to the zinc-containing alcohol dehydrogenase family. In terms of assembly, homotetramer. The cofactor is Zn(2+).

The protein resides in the cytoplasm. The catalysed reaction is L-threonine + NAD(+) = (2S)-2-amino-3-oxobutanoate + NADH + H(+). It participates in amino-acid degradation; L-threonine degradation via oxydo-reductase pathway; glycine from L-threonine: step 1/2. Catalyzes the NAD(+)-dependent oxidation of L-threonine to 2-amino-3-ketobutyrate. The chain is L-threonine 3-dehydrogenase from Aliivibrio salmonicida (strain LFI1238) (Vibrio salmonicida (strain LFI1238)).